Consider the following 210-residue polypeptide: ATP-dependent Clp protease proteolytic subunit (210 aa).

Serine 107 serves as the catalytic Nucleophile. The active site involves histidine 132.

The protein belongs to the peptidase S14 family. As to quaternary structure, fourteen ClpP subunits assemble into 2 heptameric rings which stack back to back to give a disk-like structure with a central cavity, resembling the structure of eukaryotic proteasomes.

Its subcellular location is the cytoplasm. It carries out the reaction Hydrolysis of proteins to small peptides in the presence of ATP and magnesium. alpha-casein is the usual test substrate. In the absence of ATP, only oligopeptides shorter than five residues are hydrolyzed (such as succinyl-Leu-Tyr-|-NHMec, and Leu-Tyr-Leu-|-Tyr-Trp, in which cleavage of the -Tyr-|-Leu- and -Tyr-|-Trp bonds also occurs).. Cleaves peptides in various proteins in a process that requires ATP hydrolysis. Has a chymotrypsin-like activity. Plays a major role in the degradation of misfolded proteins. The chain is ATP-dependent Clp protease proteolytic subunit from Azorhizobium caulinodans (strain ATCC 43989 / DSM 5975 / JCM 20966 / LMG 6465 / NBRC 14845 / NCIMB 13405 / ORS 571).